Reading from the N-terminus, the 856-residue chain is Histone-lysine N-methyltransferase EZA1 (856 aa).

A compositionally biased stretch (polar residues) spans 1–11 (MVTDDSNSSGR). Disordered regions lie at residues 1-34 (MVTD…GLEN), 66-87 (VSPF…NSNM), and 366-473 (NVDS…HHGS). The span at 17 to 28 (DDDDDGEEEEDR) shows a compositional bias: acidic residues. Residues 22 to 49 (GEEEEDRLEGLENRLSELKRKIQGERVR) adopt a coiled-coil conformation. Residues 68-87 (PFSSAASSRATAEDNGNSNM) are compositionally biased toward polar residues. The segment covering 374–392 (EQEHGIRGKREVPILKDSN) has biased composition (basic and acidic residues). Polar residues predominate over residues 393-419 (DLPNLSNKKQKTAASDTKMSFVNSVPS). Over residues 438–451 (KVNRDSEADAKEVG) the composition is skewed to basic and acidic residues. The region spanning 489 to 539 (PSTEWNPIEKDLYLKGVEIFGRNSCLIARNLLSGLKTCLDVSNYMRENEVS) is the SANT domain. Positions 594 to 693 (WKRIAGGKNQ…SLGEAPRRGE (100 aa)) constitute a CXC domain. Positions 707–822 (QRILLGKSDV…ASEELFYDYR (116 aa)) constitute an SET domain. Tyr821 contributes to the S-adenosyl-L-methionine binding site. Residues 827–856 (QAPVWARKPEGSKKDDSAITHRRARKHQSH) form a disordered region. Residues 833 to 845 (RKPEGSKKDDSAI) are compositionally biased toward basic and acidic residues. Residues 838–845 (SKKDDSAI) carry the Nuclear localization signal motif. The segment covering 846–856 (THRRARKHQSH) has biased composition (basic residues).

It belongs to the class V-like SAM-binding methyltransferase superfamily. Histone-lysine methyltransferase family. EZ subfamily. As to quaternary structure, component of the plant homeodomain / polycomb repressive complex 2 (PHD-PRC2) large complex during prolonged cold, composed of core PRC2 components (VRN2, EZA1, FIE and MSI1), and three related PHD finger proteins (VIL1, VIL2 and VIN3) that mediates histone H3 trimethylation on 'Lys-27' H3K27me3. Interacts with TAF13. Interacts with EOL1. Interacts (via SANT domain) with HXK1 in the nucleus.

The protein localises to the nucleus. It catalyses the reaction L-lysyl(27)-[histone H3] + 3 S-adenosyl-L-methionine = N(6),N(6),N(6)-trimethyl-L-lysyl(27)-[histone H3] + 3 S-adenosyl-L-homocysteine + 3 H(+). Its function is as follows. Polycomb group (PcG) protein. Catalytic subunit of some PcG multiprotein complex, which methylates 'Lys-27' of histone H3, leading to transcriptional repression of the affected target genes, mainly abscisic acid (ABA) responsive elements. PcG proteins act by forming multiprotein complexes, which are required to maintain the transcriptionally repressive state of homeotic genes throughout development. PcG proteins are not required to initiate repression, but to maintain it during later stages of development. Forms a nuclear complex with CLF and HXK1 to target common glucose-responsive genes and regulate glucose signaling by glucose-mediated gene repression. Affects the recruitment of HXK1 to the target chromatin. This chain is Histone-lysine N-methyltransferase EZA1, found in Arabidopsis thaliana (Mouse-ear cress).